The primary structure comprises 335 residues: Holliday junction branch migration complex subunit RuvB (335 aa).

The segment at 4–184 (ADRLIDATEK…FGIVQRLEFY (181 aa)) is large ATPase domain (RuvB-L). Residues I23, R24, G65, K68, T69, T70, 131-133 (EDY), R174, Y184, and R221 each bind ATP. T69 provides a ligand contact to Mg(2+). The small ATPAse domain (RuvB-S) stretch occupies residues 185–255 (SVEDLSYIVG…VAELALNMID (71 aa)). The segment at 258 to 335 (KSGFDYMDRK…HHFGLLPKQD (78 aa)) is head domain (RuvB-H). DNA is bound by residues R313 and R318.

It belongs to the RuvB family. In terms of assembly, homohexamer. Forms an RuvA(8)-RuvB(12)-Holliday junction (HJ) complex. HJ DNA is sandwiched between 2 RuvA tetramers; dsDNA enters through RuvA and exits via RuvB. An RuvB hexamer assembles on each DNA strand where it exits the tetramer. Each RuvB hexamer is contacted by two RuvA subunits (via domain III) on 2 adjacent RuvB subunits; this complex drives branch migration. In the full resolvosome a probable DNA-RuvA(4)-RuvB(12)-RuvC(2) complex forms which resolves the HJ.

The protein resides in the cytoplasm. It catalyses the reaction ATP + H2O = ADP + phosphate + H(+). Its function is as follows. The RuvA-RuvB-RuvC complex processes Holliday junction (HJ) DNA during genetic recombination and DNA repair, while the RuvA-RuvB complex plays an important role in the rescue of blocked DNA replication forks via replication fork reversal (RFR). RuvA specifically binds to HJ cruciform DNA, conferring on it an open structure. The RuvB hexamer acts as an ATP-dependent pump, pulling dsDNA into and through the RuvAB complex. RuvB forms 2 homohexamers on either side of HJ DNA bound by 1 or 2 RuvA tetramers; 4 subunits per hexamer contact DNA at a time. Coordinated motions by a converter formed by DNA-disengaged RuvB subunits stimulates ATP hydrolysis and nucleotide exchange. Immobilization of the converter enables RuvB to convert the ATP-contained energy into a lever motion, pulling 2 nucleotides of DNA out of the RuvA tetramer per ATP hydrolyzed, thus driving DNA branch migration. The RuvB motors rotate together with the DNA substrate, which together with the progressing nucleotide cycle form the mechanistic basis for DNA recombination by continuous HJ branch migration. Branch migration allows RuvC to scan DNA until it finds its consensus sequence, where it cleaves and resolves cruciform DNA. This is Holliday junction branch migration complex subunit RuvB from Pseudoalteromonas translucida (strain TAC 125).